Reading from the N-terminus, the 450-residue chain is Gluconate permease (450 aa).

The next 12 helical transmembrane spans lie at 6-26, 30-50, 60-80, 116-136, 142-162, 183-203, 233-253, 269-289, 312-332, 338-358, 366-386, and 430-450; these read HDAYLLLDALVTIIGLIVLIT, VHPFIALIIAAGFLGLTSGMP, DGFGGVLGFVGVILALGTMLG, VGIPLFFEIGFILLIPLVFIV, VSLIKIGIPLLAGLSAVHGLV, ILYGLIVALPTAAIAGPLFGA, FGVTLATVLLPVFLMLLKTFA, MIGHPISALLLALLVALYTFG, AIVMIIGAGGGFKQMLVASGV, HLAVNAQISPILLAWLVAAVI, TVATITGAGIVVPVIDLIPGV, and AMETILSVVGLVFILLLSLVL.

The protein belongs to the GntP permease family.

The protein localises to the cell inner membrane. Its pathway is carbohydrate acid metabolism; D-gluconate degradation. This chain is Gluconate permease (gnuT), found in Pseudomonas aeruginosa (strain ATCC 15692 / DSM 22644 / CIP 104116 / JCM 14847 / LMG 12228 / 1C / PRS 101 / PAO1).